The sequence spans 1265 residues: 1-phosphatidylinositol 4,5-bisphosphate phosphodiesterase gamma-2 (1265 aa).

The region spanning 20–131 is the PH domain; it reads RALELGTVMT…WLSGLKILHQ (112 aa). A PI-PLC X-box domain is found at 312–456; it reads QDMNNPLSHY…LREKIIIKHK (145 aa). Residues H327 and H372 contribute to the active site. 2 SH2 domains span residues 532-635 and 646-735; these read WFHK…TDPV and WYYD…RYPV. 2 positions are modified to phosphotyrosine; by BTK: Y753 and Y759. The region spanning 769-829 is the SH3 domain; that stretch reads MPQRTVKALY…PSNYVEDISA (61 aa). Residues 930-1044 form the PI-PLC Y-box domain; the sequence is LSDLVVYCKP…GYVLQPESMR (115 aa). The C2 domain maps to 1038–1169; it reads LQPESMRSEK…SGFRSVPLKN (132 aa). Y1197 is modified (phosphotyrosine; by BTK). Phosphotyrosine occurs at positions 1217 and 1245.

As to quaternary structure, part of a complex composed of EEIG1, TNFRSF11A/RANK, PLCG2, GAB2, TEC and BTK; complex formation increases in the presence of TNFSF11/RANKL. Interacts (via SH2 domain) with CSF1R (tyrosine phosphorylated). Interacts constitutively with THEMIS2. It depends on Ca(2+) as a cofactor. Post-translationally, phosphorylated on tyrosine residues by CSF1R. Phosphorylated on tyrosine residues by BTK and SYK; upon ligand-induced activation of a variety of growth factor receptors and immune system receptors. Phosphorylation leads to increased phospholipase activity.

Its subcellular location is the membrane raft. It carries out the reaction a 1,2-diacyl-sn-glycero-3-phospho-(1D-myo-inositol-4,5-bisphosphate) + H2O = 1D-myo-inositol 1,4,5-trisphosphate + a 1,2-diacyl-sn-glycerol + H(+). Functionally, the production of the second messenger molecules diacylglycerol (DAG) and inositol 1,4,5-trisphosphate (IP3) is mediated by activated phosphatidylinositol-specific phospholipase C enzymes. It is a crucial enzyme in transmembrane signaling. The polypeptide is 1-phosphatidylinositol 4,5-bisphosphate phosphodiesterase gamma-2 (Rattus norvegicus (Rat)).